Reading from the N-terminus, the 297-residue chain is Farnesyl diphosphate synthase (297 aa).

Positions 47, 50, and 79 each coordinate isopentenyl diphosphate. Mg(2+)-binding residues include Asp86 and Asp92. Position 97 (Arg97) interacts with (2E)-geranyl diphosphate. Arg98 contributes to the isopentenyl diphosphate binding site. Positions 183, 184, 221, and 238 each coordinate (2E)-geranyl diphosphate.

This sequence belongs to the FPP/GGPP synthase family. The cofactor is Mg(2+).

The protein resides in the cytoplasm. It catalyses the reaction isopentenyl diphosphate + (2E)-geranyl diphosphate = (2E,6E)-farnesyl diphosphate + diphosphate. The protein is Farnesyl diphosphate synthase of Geobacillus stearothermophilus (Bacillus stearothermophilus).